The chain runs to 1079 residues: Eukaryotic translation initiation factor 5B (1079 aa).

Residues 1–478 are disordered; the sequence is MGKKGKKSGY…QAAPAESNVS (478 aa). Positions 22 to 38 are enriched in polar residues; sequence SGQNEYLDNTSQDSPQN. The segment covering 57 to 67 has biased composition (basic residues); that stretch reads SKKKKGKKNKG. Residues Ser-73, Ser-77, and Ser-82 each carry the phosphoserine modification. A compositionally biased stretch (basic residues) spans 105 to 114; the sequence is KKGKKGKKSK. Ser-127 carries the phosphoserine modification. The segment covering 160 to 169 has biased composition (low complexity); the sequence is NNNESEAAAP. Positions 173–192 are enriched in basic and acidic residues; sequence PEVRVKTKKEKEREKKEREK. The segment covering 193–204 has biased composition (basic residues); sequence LRKKQQQAKKKG. A compositionally biased stretch (polar residues) spans 207-233; it reads GEDTLASSEVSSEVDISTPAENDSSAK. The span at 253 to 293 shows a compositional bias: basic and acidic residues; sequence MLEEKRAREEEEQRIREEEARIAEEEKRLAEVEEARKEEAR. 2 stretches are compositionally biased toward low complexity: residues 321 to 334 and 361 to 376; these read QQAL…QMLE and RSGT…LESS. Phosphothreonine is present on Thr-364. Positions 385–408 are enriched in basic and acidic residues; the sequence is EPQKDSKDDSEKVEKETEVERKEE. The span at 409 to 431 shows a compositional bias: acidic residues; the sequence is NEAEAEAVFDDWEAALEEPEVAE. A compositionally biased stretch (basic and acidic residues) spans 436-466; that stretch reads VTEKKETDIKSDAVEHSIKDKEDSKTDKVDD. One can recognise a tr-type G domain in the interval 482–700; the sequence is LRSPICCILG…LISLTQTRMS (219 aa). The segment at 491–498 is G1; the sequence is GHVDTGKT. 491–498 contacts GTP; that stretch reads GHVDTGKT. Positions 516–520 are G2; that stretch reads GITQQ. The interval 555-558 is G3; the sequence is DTPG. Positions 609-612 are G4; it reads NKVD. The segment at 677–679 is G5; the sequence is SAQ.

Belongs to the TRAFAC class translation factor GTPase superfamily. Classic translation factor GTPase family. IF-2 subfamily. Requires a monovalent cation as cofactor.

The protein resides in the cytoplasm. The catalysed reaction is GTP + H2O = GDP + phosphate + H(+). Its function is as follows. Plays a role in translation initiation. Translational GTPase that catalyzes the joining of the 40S and 60S subunits to form the 80S initiation complex with the initiator methionine-tRNA in the P-site base paired to the start codon. GTP binding and hydrolysis induces conformational changes in the enzyme that renders it active for productive interactions with the ribosome. The release of the enzyme after formation of the initiation complex is a prerequisite to form elongation-competent ribosomes. This Schizosaccharomyces pombe (strain 972 / ATCC 24843) (Fission yeast) protein is Eukaryotic translation initiation factor 5B.